We begin with the raw amino-acid sequence, 527 residues long: Type II methyltransferase M.XamI (527 aa).

It belongs to the N(4)/N(6)-methyltransferase family.

The enzyme catalyses a 2'-deoxyadenosine in DNA + S-adenosyl-L-methionine = an N(6)-methyl-2'-deoxyadenosine in DNA + S-adenosyl-L-homocysteine + H(+). Its function is as follows. A gamma subtype methylase that recognizes the double-stranded sequence 5'-GTCGAC-3', possibly methylates A-5 on both strands, and protects the DNA from cleavage by the XamI endonuclease. This Xanthomonas campestris pv. amaranthicola protein is Type II methyltransferase M.XamI.